Here is a 417-residue protein sequence, read N- to C-terminus: UDP-N-acetylglucosamine 1-carboxyvinyltransferase (417 aa).

22-23 (KN) contributes to the phosphoenolpyruvate binding site. Arg-92 serves as a coordination point for UDP-N-acetyl-alpha-D-glucosamine. Catalysis depends on Cys-116, which acts as the Proton donor. Residue Cys-116 is modified to 2-(S-cysteinyl)pyruvic acid O-phosphothioketal. Positions 304 and 326 each coordinate UDP-N-acetyl-alpha-D-glucosamine.

It belongs to the EPSP synthase family. MurA subfamily.

It is found in the cytoplasm. The catalysed reaction is phosphoenolpyruvate + UDP-N-acetyl-alpha-D-glucosamine = UDP-N-acetyl-3-O-(1-carboxyvinyl)-alpha-D-glucosamine + phosphate. The protein operates within cell wall biogenesis; peptidoglycan biosynthesis. Its function is as follows. Cell wall formation. Adds enolpyruvyl to UDP-N-acetylglucosamine. The protein is UDP-N-acetylglucosamine 1-carboxyvinyltransferase of Geobacter metallireducens (strain ATCC 53774 / DSM 7210 / GS-15).